The sequence spans 217 residues: Large ribosomal subunit protein uL4 (217 aa).

A disordered region spans residues 42–100 (RAAARQGTHSTKTRGDVSGGGRKPYRQKGTGRARQGSTRAPQFTGGGVVHGPKPRDYSQ).

The protein belongs to the universal ribosomal protein uL4 family. Part of the 50S ribosomal subunit.

Functionally, one of the primary rRNA binding proteins, this protein initially binds near the 5'-end of the 23S rRNA. It is important during the early stages of 50S assembly. It makes multiple contacts with different domains of the 23S rRNA in the assembled 50S subunit and ribosome. Forms part of the polypeptide exit tunnel. This chain is Large ribosomal subunit protein uL4, found in Mycolicibacterium paratuberculosis (strain ATCC BAA-968 / K-10) (Mycobacterium paratuberculosis).